Reading from the N-terminus, the 224-residue chain is MAISDWPEAERPREKLIQKGATVLSDAELLAIFLRTGITGKSAVELARNLLTHFGSLTKLCAANLHEFSKLPGMGPAKFAQLQAVMEMARRALAEELKSGDIMDSPQSVRSYLRLSLGGKPHEVFVGIFLDARHRTIMIEELFRGTLTQASVYPREVVKRALYHNAAAMIFAHNHPSGVAEPSRADEMLTQSLKQALALVDVKVLDHFVIGNNETVSFAERGLI.

Residues 102–224 (IMDSPQSVRS…TVSFAERGLI (123 aa)) form the MPN domain. Residues His173, His175, and Asp186 each contribute to the Zn(2+) site. Residues 173–186 (HNHPSGVAEPSRAD) carry the JAMM motif motif.

Belongs to the UPF0758 family.

The chain is UPF0758 protein Neut_0782 from Nitrosomonas eutropha (strain DSM 101675 / C91 / Nm57).